A 74-amino-acid polypeptide reads, in one-letter code: UPF0435 protein GTNG_0390 (74 aa).

It belongs to the UPF0435 family.

In Geobacillus thermodenitrificans (strain NG80-2), this protein is UPF0435 protein GTNG_0390.